A 378-amino-acid chain; its full sequence is Acetylornithine deacetylase (378 aa).

Residue H76 participates in Zn(2+) binding. Residue D78 is part of the active site. D108 lines the Zn(2+) pocket. The active site involves E140. 3 residues coordinate Zn(2+): E141, E165, and H351.

The protein belongs to the peptidase M20A family. ArgE subfamily. In terms of assembly, homodimer. Requires Zn(2+) as cofactor. Co(2+) serves as cofactor. It depends on glutathione as a cofactor.

The protein resides in the cytoplasm. It catalyses the reaction N(2)-acetyl-L-ornithine + H2O = L-ornithine + acetate. Its pathway is amino-acid biosynthesis; L-arginine biosynthesis; L-ornithine from N(2)-acetyl-L-ornithine (linear): step 1/1. Functionally, catalyzes the hydrolysis of the amide bond of N(2)-acetylated L-amino acids. Cleaves the acetyl group from N-acetyl-L-ornithine to form L-ornithine, an intermediate in L-arginine biosynthesis pathway, and a branchpoint in the synthesis of polyamines. The chain is Acetylornithine deacetylase from Vibrio atlanticus (strain LGP32) (Vibrio splendidus (strain Mel32)).